Reading from the N-terminus, the 411-residue chain is Meiotic driver wtf33 (411 aa).

The segment at 1 to 95 (MKNKYYPLRS…ENHSSGTADN (95 aa)) is disordered. The segment covering 11-29 (SMDELSTKNDNEIDLEKGP) has biased composition (basic and acidic residues). A compositionally biased stretch (polar residues) spans 57–72 (GANNPNLFNTDESTTP). Helical transmembrane passes span 104-124 (AILS…YLTY), 137-157 (WVYF…LWCF), 244-264 (EMMI…FGCV), 281-301 (TISA…WTLW), 303-323 (ALSG…LVNG), and 336-356 (GYEI…LYEM).

The protein belongs to the WTF family. As to quaternary structure, homomer. Forms protein aggregates. The two isoforms can interact with each other and with themselves. High sequence similarity is required for their interaction.

The protein localises to the spore membrane. It localises to the vacuole membrane. The protein resides in the ascus epiplasm. It is found in the cytoplasm. Its subcellular location is the endoplasmic reticulum membrane. Functionally, promotes unequal transmission of alleles from the parental zygote to progeny spores by acting as poison/antidote system where the poison and antidote proteins are produced from the same locus; the poison component is trans-acting and targets all spores within an ascus whereas the antidote component is spore-specific, leading to poisoning of all progeny that do not inherit the allele. Localizes isoform 2 to the vacuole thereby facilitating its degradation. In terms of biological role, forms toxic aggregates that disrupt spore maturation. The protein is Meiotic driver wtf33 of Schizosaccharomyces kambucha (Fission yeast).